The chain runs to 127 residues: Sulfiredoxin (127 aa).

It belongs to the sulfiredoxin family. It depends on Mg(2+) as a cofactor. Forms a transient disulfide bond with TSA1 during the reduction of cysteine sulfinic acid (-SO2H).

The protein localises to the cytoplasm. Its subcellular location is the nucleus. It catalyses the reaction S-hydroxy-S-oxy-L-cysteinyl-[peroxiredoxin] + [protein]-dithiol + ATP = S-hydroxy-L-cysteinyl-[peroxiredoxin] + [protein]-disulfide + ADP + phosphate. Functionally, contributes to oxidative stress resistance by reducing cysteine-sulfinic acid formed under exposure to oxidants in the peroxiredoxin TSA1. May catalyze the reduction in a multi-step process by acting both as a specific phosphotransferase and as thioltransferase. This Saccharomyces cerevisiae (strain ATCC 204508 / S288c) (Baker's yeast) protein is Sulfiredoxin.